A 150-amino-acid chain; its full sequence is Probable NADH dehydrogenase [ubiquinone] 1 alpha subcomplex subunit 5 (150 aa).

Belongs to the complex I NDUFA5 subunit family. As to quaternary structure, complex I is composed of 45 different subunits.

The protein resides in the mitochondrion inner membrane. In terms of biological role, accessory subunit of the mitochondrial membrane respiratory chain NADH dehydrogenase (Complex I), that is believed not to be involved in catalysis. Complex I functions in the transfer of electrons from NADH to the respiratory chain. The immediate electron acceptor for the enzyme is believed to be ubiquinone. The polypeptide is Probable NADH dehydrogenase [ubiquinone] 1 alpha subcomplex subunit 5 (Caenorhabditis elegans).